A 91-amino-acid chain; its full sequence is Salivary lectin pathway inhibitor (91 aa).

Residues 1-21 form the signal peptide; it reads MGLTETTLVLVSLAFFASAVA. 2 N-linked (GlcNAc...) asparagine glycosylation sites follow: Asn-26 and Asn-87.

Belongs to the salp14 family. In terms of processing, glycosylated; deglycosylation largely abrogates the complement inhibitory effect. Nymph salivary gland (at protein level). Saliva (at protein level). Not detected in midgut.

It is found in the secreted. In terms of biological role, inhibits the lectin pathway of complement system activation in the host by reducing binding of mannose-binding lectin and L-ficolin to their ligands. Does not affect the classical and alternative pathways of complement system activation in the host. Functionally, (Microbial infection) Protects Borrelia garinii (strain A87S) from host complement-mediated killing by preventing deposition of host C5b-9 membrane attack complexes on the surface of spirochetes. Inhibits phagocytosis of B.garinii (strain A87S) by human neutrophils. Impairs Borrelia-induced complement-mediated chemotaxis of human polymorphonuclear leukocytes. (Microbial infection) Protects Borrelia burgdorferi (strain N40), which is resistant to normal human serum, from Borrelia-opsonizing antibody-mediated complement-dependent killing. This chain is Salivary lectin pathway inhibitor, found in Ixodes scapularis (Black-legged tick).